A 251-amino-acid polypeptide reads, in one-letter code: Hydroxyacylglutathione hydrolase (251 aa).

Residues His53, His55, Asp57, His58, His110, Asp127, and His165 each contribute to the Zn(2+) site.

Belongs to the metallo-beta-lactamase superfamily. Glyoxalase II family. As to quaternary structure, monomer. Zn(2+) is required as a cofactor.

The catalysed reaction is an S-(2-hydroxyacyl)glutathione + H2O = a 2-hydroxy carboxylate + glutathione + H(+). Its pathway is secondary metabolite metabolism; methylglyoxal degradation; (R)-lactate from methylglyoxal: step 2/2. Its function is as follows. Thiolesterase that catalyzes the hydrolysis of S-D-lactoyl-glutathione to form glutathione and D-lactic acid. The sequence is that of Hydroxyacylglutathione hydrolase from Enterobacter sp. (strain 638).